The following is a 297-amino-acid chain: GTPase Era (297 aa).

The region spanning 3–171 (KSGFVSIVGR…IKVIQNYLEE (169 aa)) is the Era-type G domain. A G1 region spans residues 11 to 18 (GRPNVGKS). 11–18 (GRPNVGKS) is a binding site for GTP. The segment at 37–41 (QTTRN) is G2. The tract at residues 58–61 (DTPG) is G3. Residues 58–62 (DTPGI) and 120–123 (NKID) contribute to the GTP site. Residues 120–123 (NKID) form a G4 region. Residues 150-152 (ISA) are G5. One can recognise a KH type-2 domain in the interval 194–280 (IREKVLHYLN…NLQLWVKVKE (87 aa)).

Belongs to the TRAFAC class TrmE-Era-EngA-EngB-Septin-like GTPase superfamily. Era GTPase family. As to quaternary structure, monomer.

It localises to the cytoplasm. It is found in the cell membrane. In terms of biological role, an essential GTPase that binds both GDP and GTP, with rapid nucleotide exchange. Plays a role in 16S rRNA processing and 30S ribosomal subunit biogenesis and possibly also in cell cycle regulation and energy metabolism. The protein is GTPase Era of Clostridioides difficile (strain 630) (Peptoclostridium difficile).